The primary structure comprises 447 residues: Phosphoglucosamine mutase (447 aa).

Ser101 (phosphoserine intermediate) is an active-site residue. Residues Ser101, Asp242, Asp244, and Asp246 each contribute to the Mg(2+) site. Ser101 is subject to Phosphoserine.

The protein belongs to the phosphohexose mutase family. Mg(2+) serves as cofactor. In terms of processing, activated by phosphorylation.

The enzyme catalyses alpha-D-glucosamine 1-phosphate = D-glucosamine 6-phosphate. Catalyzes the conversion of glucosamine-6-phosphate to glucosamine-1-phosphate. The sequence is that of Phosphoglucosamine mutase from Bradyrhizobium diazoefficiens (strain JCM 10833 / BCRC 13528 / IAM 13628 / NBRC 14792 / USDA 110).